A 395-amino-acid chain; its full sequence is MSLDLRARVREELERLKREGLYISPKVLEAPQEPVTRVEGREVVNLASNNYLGFANHPYLKEKARQYLEKWGAGSGAVRTIAGTFTYHVELEEALARFKGTESALVLQSGFTANQGVLGALLKEGDVVFSDELNHASIIDGLRLTKATRLVFRHADVAHLEELLKAHDTDGLKLIVTDGVFSMDGDIAPLDKIVPLAKKYKAVVYVDDAHGSGVLGEKGKGTVHHFGFHQDPDVVQVATLSKAWAGIGGYAAGARELKDLLINKARPFLFSTSHPPAVVGALLGALELIEKEPERVERLWENTRYFKRELARLGYDTLGSQTPITPVLFGEAPLAFEASRLLLEEGVFAVGIGFPTVPRGKARIRNIVTAAHTKEMLDKALEAYEKVGKRLGIIR.

110–111 (GF) contacts pyridoxal 5'-phosphate. H135 contributes to the substrate binding site. Pyridoxal 5'-phosphate contacts are provided by residues S182, 207–210 (DDAH), and 239–242 (TLSK). Residue K242 is modified to N6-(pyridoxal phosphate)lysine. T356 serves as a coordination point for substrate.

Belongs to the class-II pyridoxal-phosphate-dependent aminotransferase family. In terms of assembly, homodimer. Requires pyridoxal 5'-phosphate as cofactor.

The catalysed reaction is 6-carboxyhexanoyl-[ACP] + L-alanine + H(+) = (8S)-8-amino-7-oxononanoate + holo-[ACP] + CO2. The enzyme catalyses glycine + acetyl-CoA = (2S)-2-amino-3-oxobutanoate + CoA. The protein operates within cofactor biosynthesis; biotin biosynthesis. Its function is as follows. Catalyzes the decarboxylative condensation of pimeloyl-[acyl-carrier protein] and L-alanine to produce 8-amino-7-oxononanoate (AON), [acyl-carrier protein], and carbon dioxide. Can also use pimeloyl-CoA instead of pimeloyl-ACP as substrate. It also converts 2-amino-3-ketobutyrate and CoA to glycine and acetyl-CoA. Activity is also observed with the following combinations of substrates: acetyl-CoA and either L-alanine or L-serine, pimeloyl-CoA and either glycine or L-serine, and palmitoyl-CoA with L-alanine. The protein is 8-amino-7-oxononanoate synthase/2-amino-3-ketobutyrate coenzyme A ligase of Thermus thermophilus (strain ATCC 27634 / DSM 579 / HB8).